Consider the following 327-residue polypeptide: GMP reductase (327 aa).

Residue Cys-176 is the Thioimidate intermediate of the active site. Ile-205 to Val-228 is an NADP(+) binding site.

It belongs to the IMPDH/GMPR family. GuaC type 2 subfamily.

It catalyses the reaction IMP + NH4(+) + NADP(+) = GMP + NADPH + 2 H(+). Functionally, catalyzes the irreversible NADPH-dependent deamination of GMP to IMP. It functions in the conversion of nucleobase, nucleoside and nucleotide derivatives of G to A nucleotides, and in maintaining the intracellular balance of A and G nucleotides. This is GMP reductase from Streptococcus gordonii (strain Challis / ATCC 35105 / BCRC 15272 / CH1 / DL1 / V288).